The chain runs to 242 residues: Biosynthetic peptidoglycan transglycosylase (242 aa).

The helical transmembrane segment at Leu19–Val39 threads the bilayer.

The protein belongs to the glycosyltransferase 51 family.

It is found in the cell inner membrane. It catalyses the reaction [GlcNAc-(1-&gt;4)-Mur2Ac(oyl-L-Ala-gamma-D-Glu-L-Lys-D-Ala-D-Ala)](n)-di-trans,octa-cis-undecaprenyl diphosphate + beta-D-GlcNAc-(1-&gt;4)-Mur2Ac(oyl-L-Ala-gamma-D-Glu-L-Lys-D-Ala-D-Ala)-di-trans,octa-cis-undecaprenyl diphosphate = [GlcNAc-(1-&gt;4)-Mur2Ac(oyl-L-Ala-gamma-D-Glu-L-Lys-D-Ala-D-Ala)](n+1)-di-trans,octa-cis-undecaprenyl diphosphate + di-trans,octa-cis-undecaprenyl diphosphate + H(+). The protein operates within cell wall biogenesis; peptidoglycan biosynthesis. Functionally, peptidoglycan polymerase that catalyzes glycan chain elongation from lipid-linked precursors. This chain is Biosynthetic peptidoglycan transglycosylase, found in Escherichia coli O45:K1 (strain S88 / ExPEC).